The primary structure comprises 131 residues: Putative gamma-taxilin 2 (131 aa).

The protein belongs to the taxilin family. In terms of tissue distribution, ubiquitously expressed.

This chain is Putative gamma-taxilin 2 (TXLNGY), found in Homo sapiens (Human).